We begin with the raw amino-acid sequence, 392 residues long: ATP-dependent RNA helicase eIF4A (392 aa).

The short motif at 19–47 is the Q motif element; it reads DTFDDMNLKPELLRGIYAYGFERPSAIQQ. One can recognise a Helicase ATP-binding domain in the interval 50–220; that stretch reads IMPILGERDV…TKFMRDPIRI (171 aa). 63–70 is an ATP binding site; that stretch reads AQSGTGKT. Phosphoserine is present on S65. Residues 168 to 171 carry the DEAD box motif; it reads DEAD. Positions 231-392 constitute a Helicase C-terminal domain; that stretch reads GIKQFYVAVE…EMPMNIADLI (162 aa).

The protein belongs to the DEAD box helicase family. eIF4A subfamily. In terms of assembly, component of the eIF4F complex, which composition varies with external and internal environmental conditions. It is composed of at least eIF4A, eIF4E and eIF4G.

It localises to the cytoplasm. The catalysed reaction is ATP + H2O = ADP + phosphate + H(+). Functionally, ATP-dependent RNA helicase which is a subunit of the eIF4F complex involved in cap recognition and is required for mRNA binding to ribosome. In the current model of translation initiation, eIF4A unwinds RNA secondary structures in the 5'-UTR of mRNAs which is necessary to allow efficient binding of the small ribosomal subunit, and subsequent scanning for the initiator codon. In Schizosaccharomyces pombe (strain 972 / ATCC 24843) (Fission yeast), this protein is ATP-dependent RNA helicase eIF4A (tif1).